Here is a 529-residue protein sequence, read N- to C-terminus: UDP-glycosyltransferase (529 aa).

N-linked (GlcNAc...) asparagine glycans are attached at residues asparagine 70 and asparagine 420. Residues 504–524 (LDLYLVYIALFAVPVGAVRWI) form a helical membrane-spanning segment.

It belongs to the glycosyltransferase 28 family.

The protein localises to the membrane. It carries out the reaction stromemycin aglycone + UDP-alpha-D-glucose = stromemycin + UDP + H(+). It participates in mycotoxin biosynthesis. UDP-glycosyltransferase; part of the gene cluster that mediates the biosynthesis of stromemycin, a depside C-glucoside with two unsaturated C9 side chains belonging to aromatic polyketide glycosides. Acts as the tailoring enzyme responsible for 3-C-glucosylation of bininalkenylresorcylic acid to yield stromemycin. The chain is UDP-glycosyltransferase from Talaromyces amestolkiae.